The chain runs to 300 residues: Cholesterol 25-hydroxylase-like protein (300 aa).

N-linked (GlcNAc...) asparagine glycosylation occurs at N9. Transmembrane regions (helical) follow at residues 54-73, 95-115, and 130-152; these read YTWV…VPFF, LQGW…LIWV, and MLSQ…HYIN. One can recognise a Fatty acid hydroxylase domain in the interval 135 to 266; sequence AIFFLAFDFT…WFNYLDRLMG (132 aa). A Histidine box-1 motif is present at residues 148-152; it reads FHYIN. Positions 163 to 167 match the Histidine box-2 motif; it reads HSVHH. The chain crosses the membrane as a helical span at residues 192–212; sequence ITTIPWIFPTHCLTYWIWFFI. The short motif at 242 to 248 is the Histidine box-3 element; the sequence is AHDMHHL.

This sequence belongs to the sterol desaturase family. Fe cation is required as a cofactor.

The protein localises to the membrane. Functionally, probable sterol desaturase. The chain is Cholesterol 25-hydroxylase-like protein from Caenorhabditis elegans.